A 547-amino-acid polypeptide reads, in one-letter code: Probable acetolactate synthase (547 aa).

E57 is a thiamine diphosphate binding site. FAD-binding positions include P159 and 299–318; that span reads DRVEPAREHPRPVAAGLYGD. The interval 388–468 is thiamine pyrophosphate binding; sequence DFGSYAGRMI…VVSVIGNNGI (81 aa). Residues D439 and N466 each contribute to the Mg(2+) site.

The protein belongs to the TPP enzyme family. Mg(2+) is required as a cofactor. The cofactor is thiamine diphosphate.

It catalyses the reaction 2 pyruvate + H(+) = (2S)-2-acetolactate + CO2. The protein operates within amino-acid biosynthesis; L-isoleucine biosynthesis; L-isoleucine from 2-oxobutanoate: step 1/4. Its pathway is amino-acid biosynthesis; L-valine biosynthesis; L-valine from pyruvate: step 1/4. This Mycobacterium bovis (strain ATCC BAA-935 / AF2122/97) protein is Probable acetolactate synthase (ilvG).